The sequence spans 1034 residues: MELNGSPQKPKRKHSGDPHSLPSAKHLRPDSAAPSSPRISGDQTSGDLAVYGYRNVDSADAAAMQMKLPAVQTDSAEWQETIETVVKSVVSIHFCQTASFDTDLSMSSQATGFVVDAKRGYILTNRHVVCAGPFWGYCIFDNHEECDVTPIYRDPVHDFGILKFDPKAIKYMPLTELKLQPESARVGVEIRVVGNDAGEKLSILSGVISRLDRNAPEYGEGYSDFNTNYIQAAAAASGGSSGSPVVNIDGHVIALQAGGRADGAATDYFLPLDRPLRALQCIQKGELVSRGTIQTQWIIKPFDECRRLGLSPEWEAEVRRVAPKETGMLVAEIVLPEGPGDGKLQEGDVLIKANGELLTQFVRLDDILDSSVGGDVHLLVQRGGEDLEVTCKVQDLHAITPSRYVTVAGATFHDLSYQQARLYAIACKGVYVCEAAGSFKLESTFSGWIIDSVDKRPTRNLDEFIEVLKTIPDRARIVLSYRHIRDLHTRGTSIVHIDRHWHPHMRLAQRNDQTGLWDFTDLADPIPAEPPVPRKADFIQLDGVSHPAAADIVRSFVRVSCTMPVKLDGFPQARKTGFGLVVDAEKGLVVISRAIVPFDLCDINITVADSIIVSAKVVFLHPLQNYTIIQYDPSLVQAPVKTARLSPEYIKQGAETLFVGFNQNFRIVVAKTAVTDITTVAIPPNAAAPRYRAINLDAITVDTGLSSQCTSGVLLGEDGVIQALWLNYLGERTQSSHKDVEYHLGLATPSLIPVISQIQSGVIPRLRILDMETYVIQMSQARVMGVSEEWIEKVAKANAARHELFMVRKVDCASPLSADVRPLEEGDIILTLNDKLITRVSEFDMMYDQETLDALIVRNGEEMKIKIKTVPTEDLETDRALIFCGAVLQKPHHAVRQQISKLHSEVYVSARSRGSPAYQYGLSPTNFITAVNGVKTPDLDSFIREVSNIPNNTYFRLRAVTFDNVPWVVTMKKNDHYFPMSEYIKEPSAPLGWRTVNYDRGKERRGTGDIANLNADAMDEGRDEGVSDVEPDIE.

Residues Met-1–Thr-44 are disordered. Residues Ala-33–Thr-44 are compositionally biased toward polar residues. The serine protease stretch occupies residues Val-89–Asp-273. Catalysis depends on charge relay system residues His-127, Asp-158, and Ser-240. 2 consecutive PDZ domains span residues Gln-296 to Gln-381 and Ile-882 to Asp-963. The disordered stretch occupies residues Arg-1004 to Glu-1034.

This sequence belongs to the peptidase S1C family.

It is found in the nucleus. Nuclear serine protease which mediates apoptosis. The protein is Pro-apoptotic serine protease NMA111 (NMA111) of Coccidioides immitis (strain RS) (Valley fever fungus).